A 341-amino-acid chain; its full sequence is Small ribosomal subunit protein uS3 (341 aa).

In terms of domain architecture, KH type-2 spans 38–106; that stretch reads IRRMMTRGME…QVQLNILEVK (69 aa). 2 disordered regions span residues 224–246 and 274–341; these read RAVRGRSARREQPAAESPALETA and PAGQ…TKEG. Low complexity-rich tracts occupy residues 285-303 and 311-333; these read AEQPVVTAEPAAAAAVTGE and AAPAEPTTSAAAEEAPGGADAPS.

Belongs to the universal ribosomal protein uS3 family. As to quaternary structure, part of the 30S ribosomal subunit. Forms a tight complex with proteins S10 and S14.

Its function is as follows. Binds the lower part of the 30S subunit head. Binds mRNA in the 70S ribosome, positioning it for translation. The protein is Small ribosomal subunit protein uS3 of Acidothermus cellulolyticus (strain ATCC 43068 / DSM 8971 / 11B).